The sequence spans 713 residues: Methionine--tRNA ligase (713 aa).

A 'HIGH' region motif is present at residues 31–41 (PYANGSIHLGH). 4 residues coordinate Zn(2+): Cys162, Cys165, Cys175, and Cys178. The short motif at 348 to 352 (KMSKS) is the 'KMSKS' region element. Position 351 (Lys351) interacts with ATP. One can recognise a tRNA-binding domain in the interval 609 to 713 (DFAKIDLRIV…DGAKAGMRVK (105 aa)).

The protein belongs to the class-I aminoacyl-tRNA synthetase family. MetG type 1 subfamily. Homodimer. Requires Zn(2+) as cofactor.

It localises to the cytoplasm. It carries out the reaction tRNA(Met) + L-methionine + ATP = L-methionyl-tRNA(Met) + AMP + diphosphate. Is required not only for elongation of protein synthesis but also for the initiation of all mRNA translation through initiator tRNA(fMet) aminoacylation. This chain is Methionine--tRNA ligase, found in Colwellia psychrerythraea (strain 34H / ATCC BAA-681) (Vibrio psychroerythus).